We begin with the raw amino-acid sequence, 434 residues long: UDP-N-acetylglucosamine 1-carboxyvinyltransferase (434 aa).

Residue 34-35 (KN) participates in phosphoenolpyruvate binding. Arginine 104 contributes to the UDP-N-acetyl-alpha-D-glucosamine binding site. The active-site Proton donor is cysteine 128. Residue cysteine 128 is modified to 2-(S-cysteinyl)pyruvic acid O-phosphothioketal. Residues aspartate 319 and isoleucine 341 each contribute to the UDP-N-acetyl-alpha-D-glucosamine site.

Belongs to the EPSP synthase family. MurA subfamily.

Its subcellular location is the cytoplasm. It carries out the reaction phosphoenolpyruvate + UDP-N-acetyl-alpha-D-glucosamine = UDP-N-acetyl-3-O-(1-carboxyvinyl)-alpha-D-glucosamine + phosphate. It functions in the pathway cell wall biogenesis; peptidoglycan biosynthesis. Its function is as follows. Cell wall formation. Adds enolpyruvyl to UDP-N-acetylglucosamine. This is UDP-N-acetylglucosamine 1-carboxyvinyltransferase from Prochlorococcus marinus (strain MIT 9313).